Reading from the N-terminus, the 892-residue chain is Alanine--tRNA ligase (892 aa).

Zn(2+)-binding residues include His574, His578, Cys676, and His680.

The protein belongs to the class-II aminoacyl-tRNA synthetase family. It depends on Zn(2+) as a cofactor.

It localises to the cytoplasm. It catalyses the reaction tRNA(Ala) + L-alanine + ATP = L-alanyl-tRNA(Ala) + AMP + diphosphate. Functionally, catalyzes the attachment of alanine to tRNA(Ala) in a two-step reaction: alanine is first activated by ATP to form Ala-AMP and then transferred to the acceptor end of tRNA(Ala). Also edits incorrectly charged Ser-tRNA(Ala) and Gly-tRNA(Ala) via its editing domain. This chain is Alanine--tRNA ligase, found in Prochlorococcus marinus (strain MIT 9313).